We begin with the raw amino-acid sequence, 95 residues long: Protein TusB (95 aa).

It belongs to the DsrH/TusB family. In terms of assembly, heterohexamer, formed by a dimer of trimers. The hexameric TusBCD complex contains 2 copies each of TusB, TusC and TusD. The TusBCD complex interacts with TusE.

It localises to the cytoplasm. Functionally, part of a sulfur-relay system required for 2-thiolation of 5-methylaminomethyl-2-thiouridine (mnm(5)s(2)U) at tRNA wobble positions. This chain is Protein TusB, found in Buchnera aphidicola subsp. Baizongia pistaciae (strain Bp).